The primary structure comprises 464 residues: tRNA-2-methylthio-N(6)-dimethylallyladenosine synthase (464 aa).

In terms of domain architecture, MTTase N-terminal spans 4-119; sequence RTFHIMTFGC…APQAIERLVQ (116 aa). Positions 13, 48, 82, 158, 162, and 165 each coordinate [4Fe-4S] cluster. A Radical SAM core domain is found at 144–375; sequence GEVPVSAYVN…QEVQNEYSEA (232 aa). The TRAM domain maps to 378–461; the sequence is QAMVGKTVMV…KHSLTGEPAG (84 aa). Positions 393-420 are disordered; sequence SPKSAAGSGTDAQNAAEESGRTASSWQG.

The protein belongs to the methylthiotransferase family. MiaB subfamily. In terms of assembly, monomer. The cofactor is [4Fe-4S] cluster.

The protein localises to the cytoplasm. The enzyme catalyses N(6)-dimethylallyladenosine(37) in tRNA + (sulfur carrier)-SH + AH2 + 2 S-adenosyl-L-methionine = 2-methylsulfanyl-N(6)-dimethylallyladenosine(37) in tRNA + (sulfur carrier)-H + 5'-deoxyadenosine + L-methionine + A + S-adenosyl-L-homocysteine + 2 H(+). In terms of biological role, catalyzes the methylthiolation of N6-(dimethylallyl)adenosine (i(6)A), leading to the formation of 2-methylthio-N6-(dimethylallyl)adenosine (ms(2)i(6)A) at position 37 in tRNAs that read codons beginning with uridine. The chain is tRNA-2-methylthio-N(6)-dimethylallyladenosine synthase from Oleidesulfovibrio alaskensis (strain ATCC BAA-1058 / DSM 17464 / G20) (Desulfovibrio alaskensis).